The sequence spans 284 residues: L-ribulose-5-phosphate 3-epimerase UlaE (284 aa).

It belongs to the L-ribulose-5-phosphate 3-epimerase family.

It catalyses the reaction L-ribulose 5-phosphate = L-xylulose 5-phosphate. It participates in cofactor degradation; L-ascorbate degradation; D-xylulose 5-phosphate from L-ascorbate: step 3/4. In terms of biological role, catalyzes the isomerization of L-xylulose-5-phosphate to L-ribulose-5-phosphate. Is involved in the anaerobic L-ascorbate utilization. The sequence is that of L-ribulose-5-phosphate 3-epimerase UlaE from Escherichia coli (strain 55989 / EAEC).